Here is a 562-residue protein sequence, read N- to C-terminus: MSGTILENLSGRKLSILVGSLLLCQVLCFLLGGLYAPVPAGHTNVLGSLCRENHARQNDTSFFLYSRGEGSCTQVTREEVEQDSMKLANQIVHVFQMPLPRDSRVLDYSRWQQNLIGVLQVEFGYDSSSELREPPKELQLTIDMRLAYRNKGDPDHAWKLYAHGVEHRYLDCVAAHIGSSETLYTCDMIPLFELGALHHSFYLLNLRFPLDTPKQMNLQFGHMHDLTLTAIHQNGGFTHVWLMLKTLLFPFVVGIMVWFWRRVHLLQRSPALLEYMLLYLGGALTFLNLPLEYLSLTIEMPYMLLLSDIRQGIFYAMLLSFWLVFAGEHMLIQDSHNKSTIRSRYWKHLSAVVVGCISLFVFDISERGVQLRNPFYSIWTTPLGAKVAMSFILLAGVSAAVYFLFLCYMISKVFKNIGDKRTSLPSMSQARRLHYEGLIYRFKFLMLATLLCAALTVTGFIMGQMAEGQWKWNDDVEIQLTSAFLTGVYGMWNIYIFALLILYAPSHKQWPTMHHSDETTQSNENIVASAASEEIEFSNLPSDSNPSEISSLTSFTRKVAFE.

Residues 1 to 13 (MSGTILENLSGRK) lie on the Cytoplasmic side of the membrane. A helical membrane pass occupies residues 14-34 (LSILVGSLLLCQVLCFLLGGL). At 35 to 239 (YAPVPAGHTN…AIHQNGGFTH (205 aa)) the chain is on the lumenal side. Asn58 carries N-linked (GlcNAc...) asparagine glycosylation. The chain crosses the membrane as a helical span at residues 240–260 (VWLMLKTLLFPFVVGIMVWFW). Over 261-270 (RRVHLLQRSP) the chain is Cytoplasmic. Residues 271 to 291 (ALLEYMLLYLGGALTFLNLPL) traverse the membrane as a helical segment. The Lumenal portion of the chain corresponds to 292 to 311 (EYLSLTIEMPYMLLLSDIRQ). Residues 312–332 (GIFYAMLLSFWLVFAGEHMLI) form a helical membrane-spanning segment. The Cytoplasmic segment spans residues 333–344 (QDSHNKSTIRSR). Residues 345-365 (YWKHLSAVVVGCISLFVFDIS) form a helical membrane-spanning segment. The Lumenal portion of the chain corresponds to 366-386 (ERGVQLRNPFYSIWTTPLGAK). Residues 387-407 (VAMSFILLAGVSAAVYFLFLC) traverse the membrane as a helical segment. The Cytoplasmic portion of the chain corresponds to 408 to 441 (YMISKVFKNIGDKRTSLPSMSQARRLHYEGLIYR). A helical transmembrane segment spans residues 442–462 (FKFLMLATLLCAALTVTGFIM). Residues 463-482 (GQMAEGQWKWNDDVEIQLTS) are Lumenal-facing. Residues 483–503 (AFLTGVYGMWNIYIFALLILY) traverse the membrane as a helical segment. The Cytoplasmic segment spans residues 504–562 (APSHKQWPTMHHSDETTQSNENIVASAASEEIEFSNLPSDSNPSEISSLTSFTRKVAFE). A disordered region spans residues 538–562 (SNLPSDSNPSEISSLTSFTRKVAFE). Over residues 539–556 (NLPSDSNPSEISSLTSFT) the composition is skewed to polar residues.

It belongs to the wntless family. As to quaternary structure, interacts with wg; in the Golgi. Interacts with Vps35, a component of the retromer complex; wls stability is regulated by Vps35.

The protein resides in the presynaptic cell membrane. Its subcellular location is the postsynaptic cell membrane. It is found in the cell membrane. The protein localises to the endoplasmic reticulum membrane. It localises to the endosome membrane. The protein resides in the golgi apparatus membrane. Functionally, a segment polarity gene required for wingless (wg)-dependent patterning processes, acting in both wg-sending cells and wg-target cells. In non-neuronal cells wls directs wg secretion. The wls traffic loop encompasses the Golgi, the cell surface, an endocytic compartment and a retrograde route leading back to the Golgi, and involves clathrin-mediated endocytosis and the retromer complex (a conserved protein complex consisting of Vps35 and Vps26). In neuronal cells (the larval motorneuron NMJ), the wg signal moves across the synapse via the release of wls-containing exosome-like vesicles. Postsynaptic wls is required for the trafficking of fz2 through the fz2-interacting protein Grip. This Drosophila persimilis (Fruit fly) protein is Protein wntless.